A 1130-amino-acid chain; its full sequence is Tyrosine-protein kinase ABL1 (1130 aa).

The interval 1-60 is CAP; the sequence is MLEICLKLVGCKSKKGLSSSSSCYLEEALQRPVASDFEPQGLSEAARWNSKENLLAGPSE. Leu-2 carries the N-myristoyl glycine lipid modification. Ser-50 bears the Phosphoserine mark. The 61-residue stretch at 61–121 folds into the SH3 domain; it reads NDPNLFVALY…PSNYITPVNS (61 aa). Position 70 is a phosphotyrosine; by autocatalysis (Tyr-70). A phosphotyrosine mark is found at Tyr-115, Tyr-128, Tyr-139, Tyr-172, Tyr-185, and Tyr-215. Residues 127–217 enclose the SH2 domain; sequence WYHGPVSRNA…GLITTLHYPA (91 aa). At Tyr-226 the chain carries Phosphotyrosine; by autocatalysis. Phosphoserine is present on Ser-229. Residues 242–493 enclose the Protein kinase domain; it reads ITMKHKLGGG…PSFAEIHQAF (252 aa). 248-256 contacts ATP; sequence LGGGQYGEV. Phosphotyrosine occurs at positions 253 and 257. ATP-binding positions include Lys-271 and 316-322; that span reads EFMTYGN. Catalysis depends on Asp-363, which acts as the Proton acceptor. The Kinase activation loop motif lies at 381 to 405; that stretch reads DFGLSRLMTGDTYTAHAGAKFPIKW. Residue Tyr-393 is modified to Phosphotyrosine; by autocatalysis and SRC-type Tyr-kinases. A Phosphotyrosine modification is found at Tyr-413. Phosphoserine is present on residues Ser-446, Ser-559, and Ser-569. The interval 518–996 is disordered; that stretch reads AVSTLLQAPE…SASSALAGDQ (479 aa). Basic and acidic residues predominate over residues 537-566; sequence RAAEHRDTTDVPEMPHSKGQGESDPLDHEP. Positions 586–597 are enriched in basic and acidic residues; it reads EDERLLPKDKKT. The Nuclear localization signal 1 motif lies at 605–609; the sequence is KKKKK. Residues Ser-618 and Ser-619 each carry the phosphoserine; by PAK2 modification. 3 positions are modified to phosphoserine: Ser-620, Ser-659, and Ser-683. The segment covering 620 to 640 has biased composition (basic and acidic residues); that stretch reads SFREMDGQPERRGAGEEEGRD. The segment covering 689 to 698 has biased composition (polar residues); it reads KSSTLTSSRL. The short motif at 709 to 715 is the Nuclear localization signal 2 element; the sequence is SSKRFLR. The residue at position 711 (Lys-711) is an N6-acetyllysine; by EP300. Ser-718 carries the post-translational modification Phosphoserine. Phosphothreonine is present on residues Thr-735 and Thr-751. A compositionally biased stretch (polar residues) spans 740–752; the sequence is LQSTGRQFDSSTF. Over residues 755-774 the composition is skewed to basic and acidic residues; the sequence is HKSEKPALPRKRAGENRSDQ. A Nuclear localization signal 3 motif is present at residues 762-769; the sequence is LPRKRAGE. A Phosphothreonine modification is found at Thr-781. Positions 788–802 are enriched in basic and acidic residues; it reads KKNEEAADEVFKDIM. Phosphothreonine is present on residues Thr-814, Thr-823, Thr-844, and Thr-852. Ser-855 is modified (phosphoserine). Residues 869–968 form a DNA-binding region; sequence PAEESRVRRH…VLPATPKPQS (100 aa). Residues 881-891 are compositionally biased toward basic and acidic residues; that stretch reads SSESPGRDKGK. Over residues 905-915 the composition is skewed to low complexity; it reads ASAGKAGGKPS. Ser-917 is modified (phosphoserine). Residues 953-1130 form an F-actin-binding region; the sequence is EGLKKPVLPA…VKEISDIVQR (178 aa). Polar residues predominate over residues 965–975; sequence KPQSAKPSGTP. Ser-977 is modified (phosphoserine). Residues 984–993 are compositionally biased toward low complexity; the sequence is TLPSASSALA. The short motif at 1090–1100 is the Nuclear export signal element; it reads LENNLRELQIC.

Belongs to the protein kinase superfamily. Tyr protein kinase family. ABL subfamily. Interacts with SORBS1 following insulin stimulation. Found in a trimolecular complex containing CDK5 and CABLES1. Interacts with CABLES1 and PSTPIP1. Interacts with ZDHHC16, ITGB1 and HCK. Interacts with STX17; probably phosphorylates STX17. Interacts with INPPL1/SHIP2. Interacts with the 14-3-3 proteins, YWHAB, YWHAE, YWHAG, YWHAH, SFN and YWHAZ; the interaction with 14-3-3 proteins requires phosphorylation on Thr-735 and, sequesters ABL1 into the cytoplasm. Interacts with ABI1, ABI2, BCR, CRK, FGR, FYN, HCK, LYN, PSMA7 RAD9A, RAD51, RAD52, TP73 and WASF3. A complex made of ABL1, CTTN and MYLK regulates cortical actin-based cytoskeletal rearrangement critical to sphingosine 1-phosphate (S1P)-mediated endothelial cell (EC) barrier enhancement. Interacts (via SH3 domain) with CASP9; the interaction is direct and increases in the response of cells to genotoxic stress and ABL1/c-Abl activation. Found in a complex with ABL1, ABL2, CRK and UNC119; leading to the inhibition of CRK phosphorylation by ABL kinases. Interacts with TBX21. Interacts with NEDD9/HEF1; interaction is induced by CXCL12 promotion of ABL-mediated phosphorylation of NEDD9/HEF1. Mg(2+) is required as a cofactor. Post-translationally, acetylated at Lys-711 by EP300 which promotes the cytoplasmic translocation. In terms of processing, phosphorylation at Tyr-70 by members of the SRC family of kinases disrupts SH3 domain-based autoinhibitory interactions and intermolecular associations, such as that with ABI1, and also enhances kinase activity. Phosphorylation at Tyr-226 and Tyr-393 correlate with increased activity. DNA damage-induced activation of ABL1 requires the function of ATM and Ser-446 phosphorylation. Phosphorylation at Ser-569 has been attributed to a CDC2-associated kinase and is coupled to cell division. Phosphorylation at Ser-618 and Ser-619 by PAK2 increases binding to CRK and reduces binding to ABI1. Phosphorylation on Thr-735 is required for binding 14-3-3 proteins for cytoplasmic translocation. Phosphorylated by PRKDC. Polyubiquitinated. Polyubiquitination of ABL1 leads to degradation. In terms of tissue distribution, widely expressed.

The protein localises to the cytoplasm. It is found in the cytoskeleton. The protein resides in the nucleus. Its subcellular location is the mitochondrion. It localises to the nucleus membrane. The enzyme catalyses L-tyrosyl-[protein] + ATP = O-phospho-L-tyrosyl-[protein] + ADP + H(+). Its activity is regulated as follows. Stabilized in the inactive form by an association between the SH3 domain and the SH2-TK linker region, interactions of the N-terminal cap, and contributions from an N-terminal myristoyl group and phospholipids. Activated by autophosphorylation as well as by SRC-family kinase-mediated phosphorylation. Activated by RIN1 binding to the SH2 and SH3 domains. Also stimulated by cell death inducers and DNA-damage. Phosphatidylinositol 4,5-bisphosphate (PIP2), a highly abundant phosphoinositide known to regulate cytoskeletal and membrane proteins, also inhibits the tyrosine kinase activity. Activated by 5-(1,3-diaryl-1H-pyrazol-4-yl)hydantoin, 5-[3-(4-fluorophenyl)-1-phenyl-1H-pyrazol-4-yl]-2,4-imidazolidinedione (DPH). Inhibited by ABI1, whose activity is controlled by ABL1 itself through tyrosine phosphorylation. Also inhibited by imatinib mesylate (Gleevec) which is used for the treatment of chronic myeloid leukemia (CML), and by VX-680, an inhibitor that also acts on imatinib-resistant mutants. Non-receptor tyrosine-protein kinase that plays a role in many key processes linked to cell growth and survival such as cytoskeleton remodeling in response to extracellular stimuli, cell motility and adhesion, receptor endocytosis, autophagy, DNA damage response and apoptosis. Coordinates actin remodeling through tyrosine phosphorylation of proteins controlling cytoskeleton dynamics like WASF3 (involved in branch formation); ANXA1 (involved in membrane anchoring); DBN1, DBNL, CTTN, RAPH1 and ENAH (involved in signaling); or MAPT and PXN (microtubule-binding proteins). Phosphorylation of WASF3 is critical for the stimulation of lamellipodia formation and cell migration. Involved in the regulation of cell adhesion and motility through phosphorylation of key regulators of these processes such as BCAR1, CRK, CRKL, DOK1, EFS or NEDD9. Phosphorylates multiple receptor tyrosine kinases and more particularly promotes endocytosis of EGFR, facilitates the formation of neuromuscular synapses through MUSK, inhibits PDGFRB-mediated chemotaxis and modulates the endocytosis of activated B-cell receptor complexes. Other substrates which are involved in endocytosis regulation are the caveolin (CAV1) and RIN1. Moreover, ABL1 regulates the CBL family of ubiquitin ligases that drive receptor down-regulation and actin remodeling. Phosphorylation of CBL leads to increased EGFR stability. Involved in late-stage autophagy by regulating positively the trafficking and function of lysosomal components. ABL1 targets to mitochondria in response to oxidative stress and thereby mediates mitochondrial dysfunction and cell death. In response to oxidative stress, phosphorylates serine/threonine kinase PRKD2 at 'Tyr-717'. ABL1 is also translocated in the nucleus where it has DNA-binding activity and is involved in DNA-damage response and apoptosis. Many substrates are known mediators of DNA repair: DDB1, DDB2, ERCC3, ERCC6, RAD9A, RAD51, RAD52 or WRN. Activates the proapoptotic pathway when the DNA damage is too severe to be repaired. Phosphorylates TP73, a primary regulator for this type of damage-induced apoptosis. Phosphorylates the caspase CASP9 on 'Tyr-153' and regulates its processing in the apoptotic response to DNA damage. Phosphorylates PSMA7 that leads to an inhibition of proteasomal activity and cell cycle transition blocks. ABL1 also acts as a regulator of multiple pathological signaling cascades during infection. Several known tyrosine-phosphorylated microbial proteins have been identified as ABL1 substrates. This is the case of A36R of Vaccinia virus, Tir (translocated intimin receptor) of pathogenic E.coli and possibly Citrobacter, CagA (cytotoxin-associated gene A) of H.pylori, or AnkA (ankyrin repeat-containing protein A) of A.phagocytophilum. Pathogens can highjack ABL1 kinase signaling to reorganize the host actin cytoskeleton for multiple purposes, like facilitating intracellular movement and host cell exit. Finally, functions as its own regulator through autocatalytic activity as well as through phosphorylation of its inhibitor, ABI1. Regulates T-cell differentiation in a TBX21-dependent manner. Positively regulates chemokine-mediated T-cell migration, polarization, and homing to lymph nodes and immune-challenged tissues, potentially via activation of NEDD9/HEF1 and RAP1. Phosphorylates TBX21 on tyrosine residues leading to an enhancement of its transcriptional activator activity. The sequence is that of Tyrosine-protein kinase ABL1 (ABL1) from Homo sapiens (Human).